Reading from the N-terminus, the 188-residue chain is dCTP deaminase (188 aa).

Residues K111 to R116, T135 to E137, Q156, Y170, and Q180 contribute to the dCTP site. E137 acts as the Proton donor/acceptor in catalysis.

The protein belongs to the dCTP deaminase family. As to quaternary structure, homotrimer.

The enzyme catalyses dCTP + H2O + H(+) = dUTP + NH4(+). It participates in pyrimidine metabolism; dUMP biosynthesis; dUMP from dCTP (dUTP route): step 1/2. Catalyzes the deamination of dCTP to dUTP. This chain is dCTP deaminase, found in Janthinobacterium sp. (strain Marseille) (Minibacterium massiliensis).